The chain runs to 335 residues: MIDQKIFETTLNIDDPANFCTNVEAHLLKELENIYVGKCFKNSFILNITGVIQRSPCFIMRTNNSGRGYMHVRFSALVSCLNAFDLIAAVKIIKNDSNIILGESLLTEPVTIVIPSSESQNNVAEVGQIVPVQLANSSVYYIPGRQQASATGSIFIPKHTFSVYHVQEELTQEQALNLTKLVNIIEMLLESRSKKDFKQICFFEKLYYTYSINSDEILDLKIWKGPKGKEMARLKPCNVLSFLYDALKNKSSSLGFWARPPDLFKSSPLAYQQDQNSFNTTELPIICSAEVMFVTLLKEIINYLQFMNDLCDTFNNEQLIKRHENIWMLIEQKKI.

The protein belongs to the Asfivirus DNA-directed RNA polymerase RPB7 homolog family. Part of the viral DNA-directed RNA polymerase that consists of 8 polII-like subunits (RPB1, RPB2, RPB3, RPB5, RPB6, RPB7, RPB9, RPB10), a capping enzyme and a termination factor.

It is found in the host cytoplasm. The protein resides in the virion. Functionally, component of the DNA-directed RNA polymerase (RNAP) that catalyzes the transcription in the cytoplasm of viral DNA into RNA using the four ribonucleoside triphosphates as substrates. This chain is DNA-directed RNA polymerase RPB7 homolog, found in Ornithodoros (relapsing fever ticks).